The chain runs to 187 residues: MATPEFDLGDIKRRMQGAVSSLSKDLGSLRTGRATPSLLDPIQVEAYGSSMPMAQVATVSVPEPRLLSISVWDRSMVTNVEKAIRESDLGLNPMTEGQTIRLRIPEMNEQRRKEMVKVAHKYTEEARVAVRHVRRDGLDILKKLEKDGAISQDDEKRQAAEVQKATDDAINEIDGVLASKEKEIMQV.

This sequence belongs to the RRF family.

It localises to the cytoplasm. Responsible for the release of ribosomes from messenger RNA at the termination of protein biosynthesis. May increase the efficiency of translation by recycling ribosomes from one round of translation to another. The chain is Ribosome-recycling factor from Methylorubrum extorquens (strain CM4 / NCIMB 13688) (Methylobacterium extorquens).